Reading from the N-terminus, the 702-residue chain is Ribosomal RNA large subunit methyltransferase K/L (702 aa).

In terms of domain architecture, THUMP spans 43-154 (LVYQSLMWSR…KETASIALDL (112 aa)).

This sequence belongs to the methyltransferase superfamily. RlmKL family.

It localises to the cytoplasm. The catalysed reaction is guanosine(2445) in 23S rRNA + S-adenosyl-L-methionine = N(2)-methylguanosine(2445) in 23S rRNA + S-adenosyl-L-homocysteine + H(+). It carries out the reaction guanosine(2069) in 23S rRNA + S-adenosyl-L-methionine = N(2)-methylguanosine(2069) in 23S rRNA + S-adenosyl-L-homocysteine + H(+). Specifically methylates the guanine in position 2445 (m2G2445) and the guanine in position 2069 (m7G2069) of 23S rRNA. The chain is Ribosomal RNA large subunit methyltransferase K/L from Shigella flexneri serotype 5b (strain 8401).